A 317-amino-acid polypeptide reads, in one-letter code: Melanocyte-stimulating hormone receptor (317 aa).

Over 1–37 the chain is Extracellular; it reads MPVQGSQRRLLGSLNSTPTATPHLGLAANQTGARCLE. The N-linked (GlcNAc...) asparagine glycan is linked to Asn-29. The helical transmembrane segment at 38–63 threads the bilayer; it reads VSVPDGLFLSLGLVSLVENVLVVTAI. The Cytoplasmic portion of the chain corresponds to 64–72; the sequence is AKNRNLHSP. A helical membrane pass occupies residues 73–93; sequence MYCFICCLALSDLLVSGSNML. Residues 94–118 are Extracellular-facing; sequence ETAVTLLLEAGALAARAAVVQQLDN. A helical membrane pass occupies residues 119-140; that stretch reads VIDVITCSSMLSSLCFLGAIAV. Residues 141-163 lie on the Cytoplasmic side of the membrane; sequence DRYISIFYALRYHSIVTLPRARR. The helical transmembrane segment at 164-183 threads the bilayer; the sequence is AVAAIWVASVLCSTLFIAYY. Residues 184-191 are Extracellular-facing; sequence DHAAVLLC. The helical transmembrane segment at 192–211 threads the bilayer; sequence LVVFFLAMLVLMAVLYVHML. Residues 212 to 240 lie on the Cytoplasmic side of the membrane; that stretch reads ARACQHAQGIARLHKRQRLAHQGFGLKGA. A helical membrane pass occupies residues 241–266; the sequence is ATLTILLGIFFLCWGPFFLHLTLIVL. Over 267-279 the chain is Extracellular; the sequence is CPQHPTCSCIFKN. Residues 280–300 traverse the membrane as a helical segment; sequence FNLFLALIICNAIIDPLIYAF. At 301 to 317 the chain is on the cytoplasmic side; sequence RSQELRRTLKEVLLCSW. Residue Cys-315 is the site of S-palmitoyl cysteine attachment.

It belongs to the G-protein coupled receptor 1 family. Interacts with MGRN1, but does not undergo MGRN1-mediated ubiquitination; this interaction competes with GNAS-binding and thus inhibits agonist-induced cAMP production. Interacts with OPN3; the interaction results in a decrease in MC1R-mediated cAMP signaling and ultimately a decrease in melanin production in melanocytes.

It is found in the cell membrane. Its function is as follows. Receptor for MSH (alpha, beta and gamma) and ACTH. The activity of this receptor is mediated by G proteins which activate adenylate cyclase. Mediates melanogenesis, the production of eumelanin (black/brown) and phaeomelanin (red/yellow), via regulation of cAMP signaling in melanocytes. The polypeptide is Melanocyte-stimulating hormone receptor (MC1R) (Macaca sylvanus (Barbary macaque)).